The primary structure comprises 114 residues: Protein ELF4-LIKE 4 (114 aa).

Positions 87–114 are disordered; the sequence is SVDASSEGESSGTLKSDGKANQKRFRSG. Residues 89–100 show a composition bias toward polar residues; that stretch reads DASSEGESSGTL.

The protein belongs to the EARLY FLOWERING 4 family. Homodimer.

It is found in the nucleus. Functionally, component of the central CCA1/LHY-TOC1 feedback loop in the circadian clock that promotes clock accuracy and is required for sustained rhythms in the absence of daily light/dark cycles. The protein is Protein ELF4-LIKE 4 (EFL4) of Arabidopsis thaliana (Mouse-ear cress).